The following is a 209-amino-acid chain: Pyrrolidone-carboxylate peptidase (209 aa).

Residues Glu-79, Cys-142, and His-164 contribute to the active site.

The protein belongs to the peptidase C15 family. Homotetramer.

It localises to the cytoplasm. The catalysed reaction is Release of an N-terminal pyroglutamyl group from a polypeptide, the second amino acid generally not being Pro.. Removes 5-oxoproline from various penultimate amino acid residues except L-proline. The protein is Pyrrolidone-carboxylate peptidase of Saccharolobus islandicus (strain L.S.2.15 / Lassen #1) (Sulfolobus islandicus).